Reading from the N-terminus, the 147-residue chain is Large ribosomal subunit protein uL13 (147 aa).

The protein belongs to the universal ribosomal protein uL13 family. Part of the 50S ribosomal subunit.

Its function is as follows. This protein is one of the early assembly proteins of the 50S ribosomal subunit, although it is not seen to bind rRNA by itself. It is important during the early stages of 50S assembly. This Pediococcus pentosaceus (strain ATCC 25745 / CCUG 21536 / LMG 10740 / 183-1w) protein is Large ribosomal subunit protein uL13.